A 287-amino-acid polypeptide reads, in one-letter code: Bifunctional protein FolD (287 aa).

NADP(+) contacts are provided by residues 160–162 (GRS), Ser-189, and Thr-230.

The protein belongs to the tetrahydrofolate dehydrogenase/cyclohydrolase family. Homodimer.

It carries out the reaction (6R)-5,10-methylene-5,6,7,8-tetrahydrofolate + NADP(+) = (6R)-5,10-methenyltetrahydrofolate + NADPH. The catalysed reaction is (6R)-5,10-methenyltetrahydrofolate + H2O = (6R)-10-formyltetrahydrofolate + H(+). It participates in one-carbon metabolism; tetrahydrofolate interconversion. Its function is as follows. Catalyzes the oxidation of 5,10-methylenetetrahydrofolate to 5,10-methenyltetrahydrofolate and then the hydrolysis of 5,10-methenyltetrahydrofolate to 10-formyltetrahydrofolate. This is Bifunctional protein FolD from Chlamydia caviae (strain ATCC VR-813 / DSM 19441 / 03DC25 / GPIC) (Chlamydophila caviae).